The chain runs to 1435 residues: Gag-Pol polyprotein (1435 aa).

The N-myristoyl glycine; by host moiety is linked to residue glycine 2. Residues 7–31 are interaction with Gp41; the sequence is VLSGGELDRWEKIRLRPGGKKKYKL. Residues 8–43 are interaction with host CALM1; that stretch reads LSGGELDRWEKIRLRPGGKKKYKLKHIVWASRELER. The segment at 12–19 is interaction with host AP3D1; sequence ELDRWEKI. The tract at residues 14–33 is interaction with membrane phosphatidylinositol 4,5-bisphosphate and RNA; the sequence is DRWEKIRLRPGGKKKYKLKH. Positions 16-22 match the Nuclear export signal motif; it reads WEKIRLR. A Nuclear localization signal motif is present at residues 26–32; sequence KKKYKLK. The segment at 73–77 is interaction with membrane phosphatidylinositol 4,5-bisphosphate; the sequence is EELKS. Positions 106-127 are disordered; that stretch reads EEQNKSKKKAQQAAADTGNSSQ. Phosphotyrosine; by host is present on tyrosine 132. An interaction with human PPIA/CYPA and NUP153 region spans residues 189–227; it reads NTVGGHQAAMQMLKETINEEAAEWDRLHPVQAGPVAPGQ. Residues 277–363 form a dimerization/Multimerization of capsid protein p24 region; it reads YSPSSILDIK…GGPGHKARVL (87 aa). 2 consecutive CCHC-type zinc fingers follow at residues 390–407 and 411–428; these read VKCF…NCRA and KGCW…DCTE. The tract at residues 489-493 is dimerization of protease; the sequence is PQITL. Residues 508–577 form the Peptidase A2 domain; sequence KEALLDTGAD…TPVNIIGRNL (70 aa). Catalysis depends on aspartate 513, which acts as the For protease activity; shared with dimeric partner. Dimerization of protease regions lie at residues 537–543 and 576–588; these read GIGGFIK and NLLT…LNFP. Residues 631 to 821 enclose the Reverse transcriptase domain; that stretch reads EGKISKIGPE…PPFLWMGYEL (191 aa). Mg(2+) is bound by residues aspartate 697, aspartate 772, and aspartate 773. Positions 814 to 822 are RT 'primer grip'; that stretch reads FLWMGYELH. The Tryptophan repeat motif motif lies at 985–1001; it reads WEAWWTDYWQATWIPEW. An RNase H type-1 domain is found at 1021–1144; it reads IVGAETFYVD…VDKLVSAGIR (124 aa). Residues aspartate 1030, glutamate 1065, aspartate 1085, and aspartate 1136 each contribute to the Mg(2+) site. The Integrase-type zinc finger occupies 1150-1191; that stretch reads DGIDKAQEEHEKYHTNWRAMASDFNLPPVVAKEIVASCNKCQ. Zn(2+) contacts are provided by histidine 1159, histidine 1163, cysteine 1187, and cysteine 1190. Residues 1201-1351 form the Integrase catalytic domain; sequence VDCSPGIWQL…SAGERIVDII (151 aa). 3 residues coordinate Mg(2+): aspartate 1211, aspartate 1263, and glutamate 1299. Residues 1370 to 1417 constitute a DNA-binding region (integrase-type); the sequence is FRVYYRDSRDPLWKGPAKLLWKGEGAVVIQDNSDIKVVPRRKAKIIRD.

In terms of assembly, homotrimer; further assembles as hexamers of trimers. Interacts with gp41 (via C-terminus). Interacts with host CALM1; this interaction induces a conformational change in the Matrix protein, triggering exposure of the myristate group. Interacts with host AP3D1; this interaction allows the polyprotein trafficking to multivesicular bodies during virus assembly. Part of the pre-integration complex (PIC) which is composed of viral genome, matrix protein, Vpr and integrase. As to quaternary structure, homodimer; the homodimer further multimerizes as homohexamers or homopentamers. Interacts with human PPIA/CYPA; This interaction stabilizes the capsid. Interacts with human NUP153. Interacts with host PDZD8; this interaction stabilizes the capsid. Interacts with monkey TRIM5; this interaction destabilizes the capsid. Homodimer, whose active site consists of two apposed aspartic acid residues. In terms of assembly, heterodimer of p66 RT and p51 RT (RT p66/p51). Heterodimerization of RT is essential for DNA polymerase activity. The overall folding of the subdomains is similar in p66 RT and p51 RT but the spatial arrangements of the subdomains are dramatically different. As to quaternary structure, homotetramer; may further associate as a homohexadecamer. Part of the pre-integration complex (PIC) which is composed of viral genome, matrix protein, Vpr and integrase. Interacts with human SMARCB1/INI1 and human PSIP1/LEDGF isoform 1. Interacts with human KPNA3; this interaction might play a role in nuclear import of the pre-integration complex. Interacts with human NUP153; this interaction might play a role in nuclear import of the pre-integration complex. Mg(2+) serves as cofactor. Post-translationally, specific enzymatic cleavages by the viral protease yield mature proteins. The protease is released by autocatalytic cleavage. The polyprotein is cleaved during and after budding, this process is termed maturation. Proteolytic cleavage of p66 RT removes the RNase H domain to yield the p51 RT subunit. Nucleocapsid protein p7 might be further cleaved after virus entry. Tyrosine phosphorylated presumably in the virion by a host kinase. Phosphorylation is apparently not a major regulator of membrane association. In terms of processing, phosphorylated possibly by host MAPK1; this phosphorylation is necessary for Pin1-mediated virion uncoating. Post-translationally, methylated by host PRMT6, impairing its function by reducing RNA annealing and the initiation of reverse transcription.

The protein resides in the host cell membrane. The protein localises to the host endosome. It is found in the host multivesicular body. It localises to the virion membrane. Its subcellular location is the host nucleus. The protein resides in the host cytoplasm. The protein localises to the virion. The catalysed reaction is Specific for a P1 residue that is hydrophobic, and P1' variable, but often Pro.. It carries out the reaction Endohydrolysis of RNA in RNA/DNA hybrids. Three different cleavage modes: 1. sequence-specific internal cleavage of RNA. Human immunodeficiency virus type 1 and Moloney murine leukemia virus enzymes prefer to cleave the RNA strand one nucleotide away from the RNA-DNA junction. 2. RNA 5'-end directed cleavage 13-19 nucleotides from the RNA end. 3. DNA 3'-end directed cleavage 15-20 nucleotides away from the primer terminus.. It catalyses the reaction 3'-end directed exonucleolytic cleavage of viral RNA-DNA hybrid.. The enzyme catalyses DNA(n) + a 2'-deoxyribonucleoside 5'-triphosphate = DNA(n+1) + diphosphate. Its activity is regulated as follows. Protease: The viral protease is inhibited by many synthetic protease inhibitors (PIs), such as amprenavir, atazanavir, indinavir, loprinavir, nelfinavir, ritonavir and saquinavir. Use of protease inhibitors in tritherapy regimens permit more ambitious therapeutic strategies. Reverse transcriptase/ribonuclease H: RT can be inhibited either by nucleoside RT inhibitors (NRTIs) or by non nucleoside RT inhibitors (NNRTIs). NRTIs act as chain terminators, whereas NNRTIs inhibit DNA polymerization by binding a small hydrophobic pocket near the RT active site and inducing an allosteric change in this region. Classical NRTIs are abacavir, adefovir (PMEA), didanosine (ddI), lamivudine (3TC), stavudine (d4T), tenofovir (PMPA), zalcitabine (ddC), and zidovudine (AZT). Classical NNRTIs are atevirdine (BHAP U-87201E), delavirdine, efavirenz (DMP-266), emivirine (I-EBU), and nevirapine (BI-RG-587). The tritherapies used as a basic effective treatment of AIDS associate two NRTIs and one NNRTI. Mediates, with Gag polyprotein, the essential events in virion assembly, including binding the plasma membrane, making the protein-protein interactions necessary to create spherical particles, recruiting the viral Env proteins, and packaging the genomic RNA via direct interactions with the RNA packaging sequence (Psi). Gag-Pol polyprotein may regulate its own translation, by the binding genomic RNA in the 5'-UTR. At low concentration, the polyprotein would promote translation, whereas at high concentration, the polyprotein would encapsidate genomic RNA and then shut off translation. Its function is as follows. Targets the polyprotein to the plasma membrane via a multipartite membrane-binding signal, that includes its myristoylated N-terminus. Matrix protein is part of the pre-integration complex. Implicated in the release from host cell mediated by Vpu. Binds to RNA. Functionally, forms the conical core that encapsulates the genomic RNA-nucleocapsid complex in the virion. Most core are conical, with only 7% tubular. The core is constituted by capsid protein hexamer subunits. The core is disassembled soon after virion entry. Host restriction factors such as TRIM5-alpha or TRIMCyp bind retroviral capsids and cause premature capsid disassembly, leading to blocks in reverse transcription. Capsid restriction by TRIM5 is one of the factors which restricts HIV-1 to the human species. Host PIN1 apparently facilitates the virion uncoating. On the other hand, interactions with PDZD8 or CYPA stabilize the capsid. In terms of biological role, encapsulates and protects viral dimeric unspliced genomic RNA (gRNA). Binds these RNAs through its zinc fingers. Acts as a nucleic acid chaperone which is involved in rearangement of nucleic acid secondary structure during gRNA retrotranscription. Also facilitates template switch leading to recombination. As part of the polyprotein, participates in gRNA dimerization, packaging, tRNA incorporation and virion assembly. Aspartyl protease that mediates proteolytic cleavages of Gag and Gag-Pol polyproteins during or shortly after the release of the virion from the plasma membrane. Cleavages take place as an ordered, step-wise cascade to yield mature proteins. This process is called maturation. Displays maximal activity during the budding process just prior to particle release from the cell. Also cleaves Nef and Vif, probably concomitantly with viral structural proteins on maturation of virus particles. Hydrolyzes host EIF4GI and PABP1 in order to shut off the capped cellular mRNA translation. The resulting inhibition of cellular protein synthesis serves to ensure maximal viral gene expression and to evade host immune response. Also mediates cleavage of host YTHDF3. Mediates cleavage of host CARD8, thereby activating the CARD8 inflammasome, leading to the clearance of latent HIV-1 in patient CD4(+) T-cells after viral reactivation; in contrast, HIV-1 can evade CARD8-sensing when its protease remains inactive in infected cells prior to viral budding. Its function is as follows. Multifunctional enzyme that converts the viral RNA genome into dsDNA in the cytoplasm, shortly after virus entry into the cell. This enzyme displays a DNA polymerase activity that can copy either DNA or RNA templates, and a ribonuclease H (RNase H) activity that cleaves the RNA strand of RNA-DNA heteroduplexes in a partially processive 3' to 5' endonucleasic mode. Conversion of viral genomic RNA into dsDNA requires many steps. A tRNA(3)-Lys binds to the primer-binding site (PBS) situated at the 5'-end of the viral RNA. RT uses the 3' end of the tRNA primer to perform a short round of RNA-dependent minus-strand DNA synthesis. The reading proceeds through the U5 region and ends after the repeated (R) region which is present at both ends of viral RNA. The portion of the RNA-DNA heteroduplex is digested by the RNase H, resulting in a ssDNA product attached to the tRNA primer. This ssDNA/tRNA hybridizes with the identical R region situated at the 3' end of viral RNA. This template exchange, known as minus-strand DNA strong stop transfer, can be either intra- or intermolecular. RT uses the 3' end of this newly synthesized short ssDNA to perform the RNA-dependent minus-strand DNA synthesis of the whole template. RNase H digests the RNA template except for two polypurine tracts (PPTs) situated at the 5'-end and near the center of the genome. It is not clear if both polymerase and RNase H activities are simultaneous. RNase H probably can proceed both in a polymerase-dependent (RNA cut into small fragments by the same RT performing DNA synthesis) and a polymerase-independent mode (cleavage of remaining RNA fragments by free RTs). Secondly, RT performs DNA-directed plus-strand DNA synthesis using the PPTs that have not been removed by RNase H as primers. PPTs and tRNA primers are then removed by RNase H. The 3' and 5' ssDNA PBS regions hybridize to form a circular dsDNA intermediate. Strand displacement synthesis by RT to the PBS and PPT ends produces a blunt ended, linear dsDNA copy of the viral genome that includes long terminal repeats (LTRs) at both ends. Functionally, catalyzes viral DNA integration into the host chromosome, by performing a series of DNA cutting and joining reactions. This enzyme activity takes place after virion entry into a cell and reverse transcription of the RNA genome in dsDNA. The first step in the integration process is 3' processing. This step requires a complex comprising the viral genome, matrix protein, Vpr and integrase. This complex is called the pre-integration complex (PIC). The integrase protein removes 2 nucleotides from each 3' end of the viral DNA, leaving recessed CA OH's at the 3' ends. In the second step, the PIC enters cell nucleus. This process is mediated through integrase and Vpr proteins, and allows the virus to infect a non dividing cell. This ability to enter the nucleus is specific of lentiviruses, other retroviruses cannot and rely on cell division to access cell chromosomes. In the third step, termed strand transfer, the integrase protein joins the previously processed 3' ends to the 5' ends of strands of target cellular DNA at the site of integration. The 5'-ends are produced by integrase-catalyzed staggered cuts, 5 bp apart. A Y-shaped, gapped, recombination intermediate results, with the 5'-ends of the viral DNA strands and the 3' ends of target DNA strands remaining unjoined, flanking a gap of 5 bp. The last step is viral DNA integration into host chromosome. This involves host DNA repair synthesis in which the 5 bp gaps between the unjoined strands are filled in and then ligated. Since this process occurs at both cuts flanking the HIV genome, a 5 bp duplication of host DNA is produced at the ends of HIV-1 integration. Alternatively, Integrase may catalyze the excision of viral DNA just after strand transfer, this is termed disintegration. The protein is Gag-Pol polyprotein (gag-pol) of Human immunodeficiency virus type 1 group M subtype B (strain 89.6) (HIV-1).